The following is a 507-amino-acid chain: Methionine--tRNA ligase (507 aa).

A 'HIGH' region motif is present at residues 12–22; that stretch reads YYVNDVSHIGH. A 'KMSKS' region motif is present at residues 295–299; that stretch reads KISKS. An ATP-binding site is contributed by Lys-298.

This sequence belongs to the class-I aminoacyl-tRNA synthetase family. MetG type 2B subfamily. Monomer.

It localises to the cytoplasm. It catalyses the reaction tRNA(Met) + L-methionine + ATP = L-methionyl-tRNA(Met) + AMP + diphosphate. Is required not only for elongation of protein synthesis but also for the initiation of all mRNA translation through initiator tRNA(fMet) aminoacylation. The sequence is that of Methionine--tRNA ligase from Rickettsia typhi (strain ATCC VR-144 / Wilmington).